The primary structure comprises 258 residues: Small ribosomal subunit protein uS3 (258 aa).

The KH type-2 domain occupies 43–111 (IRKLMSTGLE…QVQLNILEVK (69 aa)). The disordered stretch occupies residues 217-258 (AREQASAAPRARGRADRPRGRRDEGAAPQQAAAPAATTGTEA). Basic and acidic residues predominate over residues 229–241 (GRADRPRGRRDEG). Residues 242-258 (AAPQQAAAPAATTGTEA) show a composition bias toward low complexity.

Belongs to the universal ribosomal protein uS3 family. Part of the 30S ribosomal subunit. Forms a tight complex with proteins S10 and S14.

In terms of biological role, binds the lower part of the 30S subunit head. Binds mRNA in the 70S ribosome, positioning it for translation. This is Small ribosomal subunit protein uS3 from Beutenbergia cavernae (strain ATCC BAA-8 / DSM 12333 / CCUG 43141 / JCM 11478 / NBRC 16432 / NCIMB 13614 / HKI 0122).